Reading from the N-terminus, the 664-residue chain is Protein-arginine deiminase type-3 (664 aa).

Belongs to the protein arginine deiminase family. Ca(2+) is required as a cofactor. Epidermis and hair follicles.

The protein localises to the cytoplasm. The enzyme catalyses L-arginyl-[protein] + H2O = L-citrullyl-[protein] + NH4(+). In terms of biological role, catalyzes the deimination of arginine residues of proteins. This Rattus norvegicus (Rat) protein is Protein-arginine deiminase type-3 (Padi3).